Here is a 608-residue protein sequence, read N- to C-terminus: Protein FAM151A (608 aa).

Residues 14–34 (WILAGSVTVTLVLAISLILGL) traverse the membrane as a helical segment. A compositionally biased stretch (polar residues) spans 586–596 (VSSNRPSSRIG). The interval 586-608 (VSSNRPSSRIGPSSVEGFPGESR) is disordered.

Belongs to the menorin family.

It localises to the membrane. The chain is Protein FAM151A (Fam151a) from Mus musculus (Mouse).